We begin with the raw amino-acid sequence, 516 residues long: 1-pyrroline-5-carboxylate dehydrogenase (516 aa).

Residues Glu-287 and Cys-321 contribute to the active site.

This sequence belongs to the aldehyde dehydrogenase family. RocA subfamily.

The catalysed reaction is L-glutamate 5-semialdehyde + NAD(+) + H2O = L-glutamate + NADH + 2 H(+). Its pathway is amino-acid degradation; L-proline degradation into L-glutamate; L-glutamate from L-proline: step 2/2. In Bacillus licheniformis (strain ATCC 14580 / DSM 13 / JCM 2505 / CCUG 7422 / NBRC 12200 / NCIMB 9375 / NCTC 10341 / NRRL NRS-1264 / Gibson 46), this protein is 1-pyrroline-5-carboxylate dehydrogenase.